A 246-amino-acid chain; its full sequence is Orotidine 5'-phosphate decarboxylase (246 aa).

Substrate contacts are provided by residues aspartate 22, lysine 44, 71–80 (DLKFHDIPNT), threonine 131, arginine 192, glutamine 201, glycine 221, and arginine 222. Lysine 73 (proton donor) is an active-site residue.

This sequence belongs to the OMP decarboxylase family. Type 1 subfamily. As to quaternary structure, homodimer.

It carries out the reaction orotidine 5'-phosphate + H(+) = UMP + CO2. It functions in the pathway pyrimidine metabolism; UMP biosynthesis via de novo pathway; UMP from orotate: step 2/2. Catalyzes the decarboxylation of orotidine 5'-monophosphate (OMP) to uridine 5'-monophosphate (UMP). The protein is Orotidine 5'-phosphate decarboxylase of Enterobacter sp. (strain 638).